An 892-amino-acid polypeptide reads, in one-letter code: Translation initiation factor IF-2 (892 aa).

The segment covering Glu165–Thr175 has biased composition (basic and acidic residues). Disordered regions lie at residues Glu165–Ser250 and Glu264–Phe300. Over residues Pro208–Ser222 the composition is skewed to low complexity. The 170-residue stretch at Pro391–Lys560 folds into the tr-type G domain. GTP is bound by residues Gly400–Thr407, Asp446–His450, and Ser500–Asp503.

It belongs to the TRAFAC class translation factor GTPase superfamily. Classic translation factor GTPase family. IF-2 subfamily.

Its subcellular location is the cytoplasm. Its function is as follows. One of the essential components for the initiation of protein synthesis. Protects formylmethionyl-tRNA from spontaneous hydrolysis and promotes its binding to the 30S ribosomal subunits. Also involved in the hydrolysis of GTP during the formation of the 70S ribosomal complex. This is Translation initiation factor IF-2 from Xylella fastidiosa (strain 9a5c).